Consider the following 98-residue polypeptide: Large ribosomal subunit protein uL23 (98 aa).

It belongs to the universal ribosomal protein uL23 family. Part of the 50S ribosomal subunit. Contacts protein L29, and trigger factor when it is bound to the ribosome.

Its function is as follows. One of the early assembly proteins it binds 23S rRNA. One of the proteins that surrounds the polypeptide exit tunnel on the outside of the ribosome. Forms the main docking site for trigger factor binding to the ribosome. This Limosilactobacillus reuteri (strain DSM 20016) (Lactobacillus reuteri) protein is Large ribosomal subunit protein uL23.